The chain runs to 303 residues: Pyridoxal 5'-phosphate synthase subunit PdxS (303 aa).

Residue Asp33 participates in D-ribose 5-phosphate binding. Lys90 acts as the Schiff-base intermediate with D-ribose 5-phosphate in catalysis. Gly162 is a binding site for D-ribose 5-phosphate. Position 174 (Arg174) interacts with D-glyceraldehyde 3-phosphate. D-ribose 5-phosphate-binding positions include Gly223 and 244–245 (GS).

The protein belongs to the PdxS/SNZ family. In terms of assembly, in the presence of PdxT, forms a dodecamer of heterodimers.

It catalyses the reaction aldehydo-D-ribose 5-phosphate + D-glyceraldehyde 3-phosphate + L-glutamine = pyridoxal 5'-phosphate + L-glutamate + phosphate + 3 H2O + H(+). It participates in cofactor biosynthesis; pyridoxal 5'-phosphate biosynthesis. In terms of biological role, catalyzes the formation of pyridoxal 5'-phosphate from ribose 5-phosphate (RBP), glyceraldehyde 3-phosphate (G3P) and ammonia. The ammonia is provided by the PdxT subunit. Can also use ribulose 5-phosphate and dihydroxyacetone phosphate as substrates, resulting from enzyme-catalyzed isomerization of RBP and G3P, respectively. This is Pyridoxal 5'-phosphate synthase subunit PdxS from Streptomyces coelicolor (strain ATCC BAA-471 / A3(2) / M145).